We begin with the raw amino-acid sequence, 445 residues long: uncharacterized protein (445 aa).

This is an uncharacterized protein from Acanthamoeba polyphaga mimivirus (APMV).